Reading from the N-terminus, the 925-residue chain is MERDGCAGGGSRGGEGGRAPREGPAGNGRDRGRSHAAEAPGDPQAAASLLAPMDVGEEPLEKAARARTAKDPNTYKVLSLVLSVCVLTTILGCIFGLKPSCAKEVKSCKGRCFERTFGNCRCDAACVELGNCCLDYQETCIEPEHIWTCNKFRCGEKRLTRSLCACSDDCKDKGDCCINYSSVCQGEKSWVEEPCESINEPQCPAGFETPPTLLFSLDGFRAEYLHTWGGLLPVISKLKKCGTYTKNMRPVYPTKTFPNHYSIVTGLYPESHGIIDNKMYDPKMNASFSLKSKEKFNPEWYKGEPIWVTAKYQGLKSGTFFWPGSDVEINGIFPDIYKMYNGSVPFEERILAVLQWLQLPKDERPHFYTLYLEEPDSSGHSYGPVSSEVIKALQRVDGMVGMLMDGLKELNLHRCLNLILISDHGMEQGSCKKYIYLNKYLGDVKNIKVIYGPAARLRPSDVPDKYYSFNYEGIARNLSCREPNQHFKPYLKHFLPKRLHFAKSDRIEPLTFYLDPQWQLALNPSERKYCGSGFHGSDNVFSNMQALFVGYGPGFKHGIEADTFENIEVYNLMCDLLNLTPAPNNGTHGSLNHLLKNPVYTPKHPKEVHPLVQCPFTRNPRDNLGCSCNPSILPIEDFQTQFNLTVAEEKIIKHETLPYGRPRVLQKENTICLLSQHQFMSGYSQDILMPLWTSYTVDRNDSFSTEDFSNCLYQDFRIPLSPVHKCSFYKNNTKVSYGFLSPPQLNKNSSGIYSEALLTTNIVPMYQSFQVIWRYFHDTLLRKYAEERNGVNVVSGPVFDFDYDGRCDSLENLRQKRRVIRNQEILIPTHFFIVLTSCKDTSQTPLHCENLDTLAFILPHRTDNSESCVHGKHDSSWVEELLMLHRARITDVEHITGLSFYQQRKEPVSDILKLKTHLPTFSQED.

Over residues 1–17 the composition is skewed to gly residues; sequence MERDGCAGGGSRGGEGG. Residues 1-43 form a disordered region; sequence MERDGCAGGGSRGGEGGRAPREGPAGNGRDRGRSHAAEAPGDP. The Cytoplasmic portion of the chain corresponds to 1–76; that stretch reads MERDGCAGGG…RTAKDPNTYK (76 aa). The Di-leucine motif motif lies at 45–52; that stretch reads AAASLLAP. Residues 77-97 traverse the membrane as a helical; Signal-anchor for type II membrane protein segment; it reads VLSLVLSVCVLTTILGCIFGL. Residues 98–925 are Extracellular-facing; it reads KPSCAKEVKS…THLPTFSQED (828 aa). SMB domains follow at residues 104-144 and 145-189; these read EVKS…IEPE and HIWT…GEKS. Cystine bridges form between Cys-108–Cys-122, Cys-112–Cys-140, Cys-120–Cys-133, Cys-126–Cys-132, Cys-149–Cys-166, Cys-154–Cys-184, Cys-164–Cys-177, Cys-170–Cys-176, Cys-195–Cys-241, and Cys-203–Cys-415. An N-linked (GlcNAc...) asparagine glycan is attached at Asn-179. The tract at residues 191-591 is phosphodiesterase; sequence VEEPCESINE…APNNGTHGSL (401 aa). Residues Asp-218, Thr-256, and Asn-277 each coordinate AMP. The Zn(2+) site is built by Asp-218 and Thr-256. Thr-256 serves as the catalytic AMP-threonine intermediate. CMP contacts are provided by Thr-256 and Asn-277. DTMP is bound by residues Thr-256 and Asn-277. Residues Thr-256 and Asn-277 each contribute to the GMP site. Phosphothreonine is present on Thr-256. The N-linked (GlcNAc...) asparagine glycan is linked to Asn-285. Residues Leu-290, Lys-295, and Tyr-340 each contribute to the GMP site. AMP is bound by residues Lys-295 and Tyr-340. Positions 295 and 340 each coordinate CMP. Tyr-340 lines the dTMP pocket. N-linked (GlcNAc...) asparagine glycosylation is present at Asn-341. Asp-376 lines the AMP pocket. Zn(2+) is bound by residues Asp-376, His-380, Asp-423, and His-424. Residue Asp-376 coordinates CMP. DTMP is bound at residue Asp-376. Residue Asp-376 participates in GMP binding. Residue His-380 coordinates 2',3'-cGAMP. His-424 is an AMP binding site. His-424 is a binding site for CMP. His-424 contacts dTMP. His-424 lines the GMP pocket. Cystine bridges form between Cys-431-Cys-530, Cys-480-Cys-868, Cys-614-Cys-672, Cys-626-Cys-726, Cys-628-Cys-711, and Cys-838-Cys-848. A glycan (N-linked (GlcNAc...) asparagine) is linked at Asn-477. Ser-532 contacts 2',3'-cGAMP. An AMP-binding site is contributed by His-535. Position 535 (His-535) interacts with Zn(2+). Position 535 (His-535) interacts with CMP. Position 535 (His-535) interacts with dTMP. Residue His-535 participates in GMP binding. N-linked (GlcNAc...) asparagine glycans are attached at residues Asn-585, Asn-643, Asn-700, Asn-731, and Asn-748. The linker stretch occupies residues 597–647; the sequence is NPVYTPKHPKEVHPLVQCPFTRNPRDNLGCSCNPSILPIEDFQTQFNLTVA. Residues 654-925 form a nuclease-like domain region; sequence HETLPYGRPR…THLPTFSQED (272 aa). Residues Asp-800, Asp-802, Asp-804, Arg-806, and Asp-808 each contribute to the Ca(2+) site.

This sequence belongs to the nucleotide pyrophosphatase/phosphodiesterase family. In terms of assembly, homodimer. Interacts with INSR; leading to inhibit INSR autophosphorylation and subsequent activation of INSR kinase activity. As to quaternary structure, monomeric. Zn(2+) serves as cofactor. Autophosphorylated as part of the catalytic cycle of phosphodiesterase/pyrophosphatase activity. Post-translationally, N-glycosylated. In terms of processing, the secreted form is produced through cleavage at Lys-103 by intracellular processing. As to expression, expressed in plasma cells and also in a number of non-lymphoid tissues, including the distal convoluted tubule of the kidney, chondrocytes and epididymis. Expressed in melanocytes but not in keratinocytes.

The protein localises to the cell membrane. It localises to the basolateral cell membrane. It is found in the secreted. It carries out the reaction Hydrolytically removes 5'-nucleotides successively from the 3'-hydroxy termini of 3'-hydroxy-terminated oligonucleotides.. The enzyme catalyses a ribonucleoside 5'-triphosphate + H2O = a ribonucleoside 5'-phosphate + diphosphate + H(+). The catalysed reaction is ATP + H2O = AMP + diphosphate + H(+). It catalyses the reaction UTP + H2O = UMP + diphosphate + H(+). It carries out the reaction GTP + H2O = GMP + diphosphate + H(+). The enzyme catalyses CTP + H2O = CMP + diphosphate + H(+). The catalysed reaction is 2',3'-cGAMP + 2 H2O = GMP + AMP + 2 H(+). It catalyses the reaction P(1),P(4)-bis(5'-adenosyl) tetraphosphate + H2O = AMP + ATP + 2 H(+). It carries out the reaction 3',5'-cyclic AMP + H2O = AMP + H(+). With respect to regulation, at low concentrations of ATP, a phosphorylated intermediate is formed which inhibits further hydrolysis. Functionally, nucleotide pyrophosphatase that generates diphosphate (PPi) and functions in bone mineralization and soft tissue calcification by regulating pyrophosphate levels. PPi inhibits bone mineralization and soft tissue calcification by binding to nascent hydroxyapatite crystals, thereby preventing further growth of these crystals. Preferentially hydrolyzes ATP, but can also hydrolyze other nucleoside 5' triphosphates such as GTP, CTP and UTP to their corresponding monophosphates with release of pyrophosphate, as well as diadenosine polyphosphates, and also 3',5'-cAMP to AMP. May also be involved in the regulation of the availability of nucleotide sugars in the endoplasmic reticulum and Golgi, and the regulation of purinergic signaling. Inhibits ectopic joint calcification and maintains articular chondrocytes by repressing hedgehog signaling; it is however unclear whether hedgehog inhibition is direct or indirect. Appears to modulate insulin sensitivity and function. Also involved in melanogenesis. Also able to hydrolyze 2',3'-cGAMP (cyclic GMP-AMP), a second messenger that activates TMEM173/STING and triggers type-I interferon production. 2',3'-cGAMP degradation takes place in the lumen or extracellular space, and not in the cytosol where it is produced; the role of 2',3'-cGAMP hydrolysis is therefore unclear. Not able to hydrolyze the 2',3'-cGAMP linkage isomer 3'-3'-cGAMP. The sequence is that of Ectonucleotide pyrophosphatase/phosphodiesterase family member 1 from Homo sapiens (Human).